The chain runs to 89 residues: Small ribosomal subunit protein uS15 (89 aa).

The protein belongs to the universal ribosomal protein uS15 family. As to quaternary structure, part of the 30S ribosomal subunit. Forms a bridge to the 50S subunit in the 70S ribosome, contacting the 23S rRNA.

One of the primary rRNA binding proteins, it binds directly to 16S rRNA where it helps nucleate assembly of the platform of the 30S subunit by binding and bridging several RNA helices of the 16S rRNA. Functionally, forms an intersubunit bridge (bridge B4) with the 23S rRNA of the 50S subunit in the ribosome. The protein is Small ribosomal subunit protein uS15 of Burkholderia ambifaria (strain MC40-6).